The sequence spans 279 residues: Diaminopimelate epimerase (279 aa).

2 residues coordinate substrate: Asn-11 and Asn-64. Cys-73 serves as the catalytic Proton donor. Substrate-binding positions include 74–75 (GN), Asn-170, and 187–188 (ER). The active-site Proton acceptor is the Cys-196. 197 to 198 (GS) provides a ligand contact to substrate. Residues 255 to 279 (NTDHQRRRHSLSRSPSGRPRLQECR) are disordered.

It belongs to the diaminopimelate epimerase family. In terms of assembly, homodimer.

It is found in the cytoplasm. It carries out the reaction (2S,6S)-2,6-diaminopimelate = meso-2,6-diaminopimelate. The protein operates within amino-acid biosynthesis; L-lysine biosynthesis via DAP pathway; DL-2,6-diaminopimelate from LL-2,6-diaminopimelate: step 1/1. In terms of biological role, catalyzes the stereoinversion of LL-2,6-diaminopimelate (L,L-DAP) to meso-diaminopimelate (meso-DAP), a precursor of L-lysine. This is Diaminopimelate epimerase from Methanopyrus kandleri (strain AV19 / DSM 6324 / JCM 9639 / NBRC 100938).